The chain runs to 356 residues: GDP-mannose:di-myo-inositol-1,3'-phosphate beta-1,2-mannosyltransferase (356 aa).

It belongs to the MDIP synthase family. The cofactor is Mg(2+).

The catalysed reaction is bis(myo-inositol) 1,3'-phosphate + GDP-alpha-D-mannose = 2-O-(beta-D-mannosyl)-bis(myo-inositol) 1,3'-phosphate + GDP + H(+). It catalyses the reaction 2-O-(beta-D-mannosyl)-bis(myo-inositol) 1,3'-phosphate + GDP-alpha-D-mannose = 2-O-(beta-D-mannosyl-(1-&gt;2)-beta-D-mannosyl)-bis(myo-inositol) 1,3'-phosphate + GDP + H(+). It carries out the reaction bis(myo-inositol) 1,3'-phosphate + 2 GDP-alpha-D-mannose = 2-O-(beta-D-mannosyl-(1-&gt;2)-beta-D-mannosyl)-bis(myo-inositol) 1,3'-phosphate + 2 GDP + 2 H(+). Catalyzes the transfer of the mannosyl group from GDP-mannose to di-myo-inositol-1,3'-phosphate (DIP), producing mannosyl-di-myo-inositol phosphate (MDIP). Can also use MDIP as an acceptor of a second mannose residue, yielding di-mannosyl-di-myo-inositol phosphate (MMDIP). Minor amounts of the tri-mannosylated form are also formed. The protein is GDP-mannose:di-myo-inositol-1,3'-phosphate beta-1,2-mannosyltransferase of Thermotoga maritima (strain ATCC 43589 / DSM 3109 / JCM 10099 / NBRC 100826 / MSB8).